We begin with the raw amino-acid sequence, 394 residues long: Histidinol dehydrogenase (394 aa).

Positions 113, 172, and 195 each coordinate NAD(+). The substrate site is built by Thr218, Gln240, and His243. Residues Gln240 and His243 each contribute to the Zn(2+) site. Catalysis depends on proton acceptor residues Glu294 and His295. Residues His295, Asp327, Glu380, and His385 each coordinate substrate. Asp327 contacts Zn(2+). His385 is a binding site for Zn(2+).

It belongs to the histidinol dehydrogenase family. Requires Zn(2+) as cofactor.

It catalyses the reaction L-histidinol + 2 NAD(+) + H2O = L-histidine + 2 NADH + 3 H(+). The protein operates within amino-acid biosynthesis; L-histidine biosynthesis; L-histidine from 5-phospho-alpha-D-ribose 1-diphosphate: step 9/9. Catalyzes the sequential NAD-dependent oxidations of L-histidinol to L-histidinaldehyde and then to L-histidine. The polypeptide is Histidinol dehydrogenase (Sulfurisphaera tokodaii (strain DSM 16993 / JCM 10545 / NBRC 100140 / 7) (Sulfolobus tokodaii)).